The chain runs to 400 residues: Tryptophan synthase beta chain (400 aa).

Position 92 is an N6-(pyridoxal phosphate)lysine (Lys92).

This sequence belongs to the TrpB family. As to quaternary structure, tetramer of two alpha and two beta chains. Pyridoxal 5'-phosphate is required as a cofactor.

The catalysed reaction is (1S,2R)-1-C-(indol-3-yl)glycerol 3-phosphate + L-serine = D-glyceraldehyde 3-phosphate + L-tryptophan + H2O. Its pathway is amino-acid biosynthesis; L-tryptophan biosynthesis; L-tryptophan from chorismate: step 5/5. In terms of biological role, the beta subunit is responsible for the synthesis of L-tryptophan from indole and L-serine. This chain is Tryptophan synthase beta chain, found in Neisseria gonorrhoeae (strain NCCP11945).